The following is an 81-amino-acid chain: MDSSNCIKIDVKYDMPLHYQCDNNADKDVVNAYDTIDVDPNKRFIINHNHEQQQVNETNKQVVDKTFINDTATYNSCIIKI.

This is an uncharacterized protein from Autographa californica nuclear polyhedrosis virus (AcMNPV).